We begin with the raw amino-acid sequence, 264 residues long: Endochitinase At2g43590 (264 aa).

The signal sequence occupies residues 1–24; sequence MAFTKISLVLLLCLLGFFSETVKS. Residues 25–59 enclose the Chitin-binding type-1 domain; the sequence is QNCGCAPNLCCSQFGYCGTDDAYCGVGCRSGPCRG. 4 cysteine pairs are disulfide-bonded: cysteine 27–cysteine 35, cysteine 29–cysteine 41, cysteine 34–cysteine 48, and cysteine 52–cysteine 57. The interval 66-264 is catalytic; that stretch reads GSVGSIVTQG…GVDPGPNLSC (199 aa). The Proton donor role is filled by glutamate 128. Asparagine 261 carries an N-linked (GlcNAc...) asparagine glycan.

The protein belongs to the glycosyl hydrolase 19 family. Chitinase class I subfamily.

The enzyme catalyses Random endo-hydrolysis of N-acetyl-beta-D-glucosaminide (1-&gt;4)-beta-linkages in chitin and chitodextrins.. The sequence is that of Endochitinase At2g43590 from Arabidopsis thaliana (Mouse-ear cress).